The chain runs to 197 residues: MIVLGLTGSIGLGKSTTAKMFAEAGVPVHDSDEAVHRLYSGVAAPLVEAAFPGTVVDGVVDRAKLGARVLGDAAALKRLEAIIHPLVRADADAFLARHRTAGESIAVLDIPLLFETGGRGRVDKVVVVTAPAEVQRQRVLARPGMTEEKLAAILAKQVPDEEKRRLADFIIDTGQGLEAARAEVDAIIDELRGQRGS.

Residues 3–197 (VLGLTGSIGL…IDELRGQRGS (195 aa)) form the DPCK domain. 11–16 (GLGKST) is a binding site for ATP.

This sequence belongs to the CoaE family.

The protein resides in the cytoplasm. The catalysed reaction is 3'-dephospho-CoA + ATP = ADP + CoA + H(+). Its pathway is cofactor biosynthesis; coenzyme A biosynthesis; CoA from (R)-pantothenate: step 5/5. Catalyzes the phosphorylation of the 3'-hydroxyl group of dephosphocoenzyme A to form coenzyme A. The polypeptide is Dephospho-CoA kinase (Mesorhizobium japonicum (strain LMG 29417 / CECT 9101 / MAFF 303099) (Mesorhizobium loti (strain MAFF 303099))).